The chain runs to 254 residues: Uridine-cytidine kinase 1 (254 aa).

Residues 1–29 (MASAGGDECEGAAPEADRPHQRPFLIGVS) form a disordered region. 30–38 (GGTASGKST) is an ATP binding site. Positions 87, 115, 120, 146, 155, and 163 each coordinate substrate. D192 contacts ATP. Residues 224–254 (SYKRTFSEPGDHPGMLTSGKRSHLESSSRPH) are disordered. T228 is subject to Phosphothreonine. S230 carries the phosphoserine modification. Over residues 245-254 (SHLESSSRPH) the composition is skewed to basic and acidic residues.

Belongs to the uridine kinase family.

It catalyses the reaction uridine + ATP = UMP + ADP + H(+). It carries out the reaction cytidine + ATP = CMP + ADP + H(+). It participates in pyrimidine metabolism; CTP biosynthesis via salvage pathway; CTP from cytidine: step 1/3. It functions in the pathway pyrimidine metabolism; UMP biosynthesis via salvage pathway; UMP from uridine: step 1/1. In terms of biological role, phosphorylates uridine and cytidine to uridine monophosphate and cytidine monophosphate. Does not phosphorylate deoxyribonucleosides or purine ribonucleosides. Can use ATP or GTP as a phosphate donor. This chain is Uridine-cytidine kinase 1 (UCK1), found in Macaca fascicularis (Crab-eating macaque).